The chain runs to 283 residues: Phosphatidylglycerol--prolipoprotein diacylglyceryl transferase (283 aa).

Helical transmembrane passes span 21 to 41 (LAVR…LWLA), 60 to 80 (LLFA…VLFY), 95 to 115 (VWTG…AMLW), 124 to 144 (FFTI…AGRL), 176 to 196 (SQLY…NWFI), 203 to 223 (GAVS…VEYV), and 239 to 259 (MGQI…LWAF). Residue arginine 143 participates in a 1,2-diacyl-sn-glycero-3-phospho-(1'-sn-glycerol) binding.

It belongs to the Lgt family.

Its subcellular location is the cell inner membrane. The enzyme catalyses L-cysteinyl-[prolipoprotein] + a 1,2-diacyl-sn-glycero-3-phospho-(1'-sn-glycerol) = an S-1,2-diacyl-sn-glyceryl-L-cysteinyl-[prolipoprotein] + sn-glycerol 1-phosphate + H(+). It functions in the pathway protein modification; lipoprotein biosynthesis (diacylglyceryl transfer). In terms of biological role, catalyzes the transfer of the diacylglyceryl group from phosphatidylglycerol to the sulfhydryl group of the N-terminal cysteine of a prolipoprotein, the first step in the formation of mature lipoproteins. In Aliivibrio fischeri (strain MJ11) (Vibrio fischeri), this protein is Phosphatidylglycerol--prolipoprotein diacylglyceryl transferase.